The following is a 428-amino-acid chain: Cysteine--tRNA ligase (428 aa).

Cys-23 lines the Zn(2+) pocket. The short motif at 25 to 35 is the 'HIGH' region element; the sequence is PTVYNDLHLGN. Residues Cys-196, His-221, and Glu-225 each coordinate Zn(2+). The 'KMSKS' region motif lies at 253-257; that stretch reads KMSKS. Lys-256 is an ATP binding site.

The protein belongs to the class-I aminoacyl-tRNA synthetase family. Monomer. Zn(2+) serves as cofactor.

It is found in the cytoplasm. It catalyses the reaction tRNA(Cys) + L-cysteine + ATP = L-cysteinyl-tRNA(Cys) + AMP + diphosphate. The sequence is that of Cysteine--tRNA ligase (cysS) from Mycoplasma genitalium (strain ATCC 33530 / DSM 19775 / NCTC 10195 / G37) (Mycoplasmoides genitalium).